Here is a 201-residue protein sequence, read N- to C-terminus: Probable chemoreceptor glutamine deamidase CheD 1 (201 aa).

Belongs to the CheD family.

It catalyses the reaction L-glutaminyl-[protein] + H2O = L-glutamyl-[protein] + NH4(+). Functionally, probably deamidates glutamine residues to glutamate on methyl-accepting chemotaxis receptors (MCPs), playing an important role in chemotaxis. The chain is Probable chemoreceptor glutamine deamidase CheD 1 from Geobacter sulfurreducens (strain ATCC 51573 / DSM 12127 / PCA).